Consider the following 254-residue polypeptide: Switch-activating protein 1 (254 aa).

The segment covering methionine 1–serine 10 has biased composition (basic and acidic residues). A disordered region spans residues methionine 1–threonine 30. The span at alanine 16–alanine 25 shows a compositional bias: low complexity. Residues serine 17 and serine 19 each carry the phosphoserine modification. Repeat copies occupy residues glycine 221–methionine 224, glycine 225–methionine 228, glycine 229–methionine 232, and glycine 233–methionine 236. The interval glycine 221–methionine 236 is 4 X 4 AA tandem repeats of G-[ATV]-N-M.

Homodimer.

It localises to the nucleus. Binds to sequences required for mating-type switching. Makes a simultaneous contact with both the alpha and beta domains of the switch-activating site SAS1. Also binds to replication fork barrier 1 (RFB1) located within a 78 base pair sequence near the 3' end of the rRNA coding region. This leads to replication fork blockage. It binds the consensus sequence 5'-TA[AG]GCAGNTN[CT]AACG[AC]G-3'. Functionally, has a role in chromosome organization and integrity where it is involved in chromosome segregation. Has a role in sister chromatid cohesion and condensation. The protein is Switch-activating protein 1 (sap1) of Schizosaccharomyces pombe (strain 972 / ATCC 24843) (Fission yeast).